The primary structure comprises 719 residues: MKFHLKRYVIVTSILLSFFLLFRRQFLPLTQRQPNPINNELVSFDLIKQRNKFENPIYAKWKLSSSSPLETDLTTRCNDYFQQLLTQENFQINYHDSGYKTEPFVYKRKKWLKERIRSLRKQYKFDKNKDKYDFDQIAKQEFSIVSKNQSIHELNIYQHFSHTRIFGKCFATNNNNNNNNGVINMENPQSNQLCKSFVQKLYPWMSGNLPIFERNKERSPPQLDDSTDCIIEQIYKNSKGKGKGIIIPLMTQDKSNNQIQNIGRLIKVLRGLNNTLPIEITFMELITPEAKQQLYDIATSDSQMYPTKQDIAFVDLSPTTTNQVKGSISDSSIITLSSIFTSFEEFIILNQHIIPLIELTKFFNNERYKLHGTYFFKSPSKLKYRTTKFNIGFHEIASFIKNQLIPNKFDKHYFNLYQKGSENGDEVTIDRFFNYQFNNLIDSSLIIFNKSKTLSGLLISGNFEFLYHDDLFNIRINNTPTKTKMDYLWLGQYISGINEQIIFNFNYAIMPGILTPSQNLPKDSIECLEICSSSWGQLSDIDDISLLYITSHQLQNWLNHQKFFESLLKDKYEFKFNELVDNFLITNTNTNTNTNTNTNGNTNDKDSTKLTMGRIDLSIFEKIKTQPLKIETIIRPPTLIEPINVLGYNEPDQAWVHQDDFDRIGQNGQGQGQGQGHPFYCVYSSIGDPLKEGIRGLSINVEQSLQKKYKKLIEIWLQD.

Topologically, residues 1-4 (MKFH) are cytoplasmic. A helical membrane pass occupies residues 5–22 (LKRYVIVTSILLSFFLLF). The Lumenal segment spans residues 23 to 719 (RRQFLPLTQR…KKLIEIWLQD (697 aa)). N-linked (GlcNAc...) asparagine glycans are attached at residues Asn148, Asn273, and Asn449.

Belongs to the MNN1/MNT family.

It is found in the golgi apparatus membrane. It functions in the pathway protein modification; protein glycosylation. In terms of biological role, responsible for addition of the terminal mannose residues to the outer chain of core N-linked polysaccharides and to O-linked mannotriose. Implicated in late Golgi modifications. In Candida albicans (strain SC5314 / ATCC MYA-2876) (Yeast), this protein is Putative alpha-1,3-mannosyltransferase MNT4 (MNT4).